The sequence spans 508 residues: UBX domain-containing protein 4 (508 aa).

The interaction with UBQLN1 stretch occupies residues 1–200 (MLWFQGAIPA…PAEDLNIRVE (200 aa)). Residues 1 to 413 (MLWFQGAIPA…VHSSSGDIWT (413 aa)) lie on the Cytoplasmic side of the membrane. Composition is skewed to polar residues over residues 117 to 151 (SETS…QSRN) and 160 to 187 (TSDT…SGCS). A disordered region spans residues 117–196 (SETSVANGSQ…SDQRPAEDLN (80 aa)). The 79-residue stretch at 315-393 (ERSTVARIQF…ELAPSASVVL (79 aa)) folds into the UBX domain. The stretch at 414-434 (LLGTVLYPFLAIWRLISNFLF) is an intramembrane region. Over 435 to 508 (SNPPPTQTSV…TWNGNSTQQM (74 aa)) the chain is Cytoplasmic. Residues 440-508 (TQTSVRVTSS…TWNGNSTQQM (69 aa)) are disordered. Residues 441 to 458 (QTSVRVTSSEPPNPASSS) show a composition bias toward polar residues. Residues 459–491 (KSEKREPVRKRVLEKRGDDFKKEGKIYRLRTQD) show a composition bias toward basic and acidic residues. Phosphothreonine is present on Thr489. Positions 498 to 508 (NTWNGNSTQQM) are enriched in polar residues.

In terms of assembly, directly interacts with VCP. Interacts with UBQLN1. Forms a complex with VCP and UBQLN1. Expressed in many tissues, including heart, brain, placenta, lung, liver, skeletal muscle, kidney and pancreas. Accumulates in Alzheimer disease-afflicted brains (at protein level).

The protein localises to the endoplasmic reticulum membrane. It is found in the nucleus envelope. Functionally, involved in endoplasmic reticulum-associated protein degradation (ERAD). Acts as a platform to recruit both UBQLN1 and VCP to the ER during ERAD. This is UBX domain-containing protein 4 (UBXN4) from Homo sapiens (Human).